The sequence spans 473 residues: tRNA modification GTPase MnmE (473 aa).

Residues R28, E93, and R132 each coordinate (6S)-5-formyl-5,6,7,8-tetrahydrofolate. Residues 228–394 (GVATVLVGSP…LKQQMSNMVA (167 aa)) form the TrmE-type G domain. Residues 238–243 (NAGKST), 257–263 (SHQPGTT), and 282–285 (DTAG) each bind GTP. Positions 242 and 263 each coordinate Mg(2+). A (6S)-5-formyl-5,6,7,8-tetrahydrofolate-binding site is contributed by K473.

The protein belongs to the TRAFAC class TrmE-Era-EngA-EngB-Septin-like GTPase superfamily. TrmE GTPase family. In terms of assembly, homodimer. Heterotetramer of two MnmE and two MnmG subunits. It depends on K(+) as a cofactor.

It localises to the cytoplasm. Functionally, exhibits a very high intrinsic GTPase hydrolysis rate. Involved in the addition of a carboxymethylaminomethyl (cmnm) group at the wobble position (U34) of certain tRNAs, forming tRNA-cmnm(5)s(2)U34. In Chlorobium chlorochromatii (strain CaD3), this protein is tRNA modification GTPase MnmE.